Consider the following 141-residue polypeptide: AsCystatin (141 aa).

Residues 1–26 (MVHSQLPVAAPLRLLCALLLLPLATM) form the signal peptide. Residues 29-129 (GGLSPRSVTD…CRFQVWSCPW (101 aa)) enclose the Cystatin domain. Residues 73 to 77 (QVVTG) carry the Secondary area of contact motif. 2 disulfide bridges follow: C91–C107 and C120–C140.

This sequence belongs to the cystatin family. Expressed at a low level by the venom gland (at protein level).

It is found in the secreted. In terms of biological role, recombinant AsCystatin inhibits various C1 cysteine proteases including cathepsin L (Ki is 0.89 pM), papain (Ki is 1.74 pM) and cathepsin B (Ki is 0.69 nM). This activity has also been observed in the crude venom. This protein has no toxic activity and its function in the venom is unknown. It may play a role as a housekeeping or regulatory protein. The polypeptide is AsCystatin (Austrelaps superbus (Lowland copperhead snake)).